We begin with the raw amino-acid sequence, 252 residues long: Vacuolar iron transporter 1 (252 aa).

Residues 1–38 (MAAATDGGGLPLLADKAASHSHHHHPERHFTSGEVVRD) lie on the Cytoplasmic side of the membrane. Residues 39–59 (VIMGVSDGLTVPFALAAGLSG) form a helical membrane-spanning segment. Topologically, residues 60–65 (ASAPSS) are vacuolar. The chain crosses the membrane as a helical span at residues 66–86 (LVLTAGLAEVAAGAISMGLGG). Residues 87–170 (YLAAKSEADH…PDPKRAIQSA (84 aa)) are Cytoplasmic-facing. The interval 92-167 (SEADHYQREM…LEKPDPKRAI (76 aa)) is cytoplasmic metal binding domain (MBD). Residues Glu104, Glu107, Glu115, Glu118, Met151, and Glu155 each contribute to the Fe cation site. A helical transmembrane segment spans residues 171–191 (LTIALSYVIGGLVPLLPYMFI). Residues 192–196 (STAQN) lie on the Vacuolar side of the membrane. Residues 197 to 217 (AMLTSVGVTLVALLFFGYIKG) form a helical membrane-spanning segment. Topologically, residues 218 to 224 (RFTGNRP) are cytoplasmic. The chain crosses the membrane as a helical span at residues 225 to 245 (FLSAVQTAIIGALASAAAYGM). Residues 246-252 (AKAVQTR) lie on the Vacuolar side of the membrane.

Belongs to the CCC1 family. Homodimer. The dimeric interaction is mediated by both the transmembrane domains (TMDs) and the cytoplasmic metal binding domain (MBD). Highly expressed in leaf blades. Expressed in leaf sheaths.

Its subcellular location is the vacuole membrane. The catalysed reaction is Fe(2+)(in) = Fe(2+)(out). Functionally, vacuolar iron transporter involved in the transfer of iron ions from the cytosol to the vacuole for intracellular iron storage. Vacuolar iron storage is required for seed embryo and seedling development. May be involved in the regulation of iron translocation between flag leaves and seeds. Can transport zinc ions from the cytosol to the vacuole. This is Vacuolar iron transporter 1 from Oryza sativa subsp. japonica (Rice).